The sequence spans 155 residues: Ribonuclease H (155 aa).

One can recognise an RNase H type-1 domain in the interval aspartate 9–glutamate 150. Mg(2+)-binding residues include aspartate 18, glutamate 56, aspartate 78, and aspartate 142.

Belongs to the RNase H family. In terms of assembly, monomer. It depends on Mg(2+) as a cofactor.

Its subcellular location is the cytoplasm. The catalysed reaction is Endonucleolytic cleavage to 5'-phosphomonoester.. Its function is as follows. Endonuclease that specifically degrades the RNA of RNA-DNA hybrids. The polypeptide is Ribonuclease H (Bordetella bronchiseptica (strain ATCC BAA-588 / NCTC 13252 / RB50) (Alcaligenes bronchisepticus)).